Reading from the N-terminus, the 395-residue chain is Protein TAMALIN (395 aa).

Residues 1-52 (MTLRRLRKLQQKEEAAATPDPAARTPDSEVAPAAPVPTPGPPAAAATPGPPA) are disordered. The segment covering 16–33 (AATPDPAARTPDSEVAPA) has biased composition (low complexity). Phosphothreonine is present on Thr77. The residue at position 94 (Ser94) is a Phosphoserine. The 90-residue stretch at 101–190 (VLTLEKEDNQ…VLRLETLYGT (90 aa)) folds into the PDZ domain. An interaction with PSCD3 region spans residues 181 to 258 (VLRLETLYGT…GAGLLPGSLP (78 aa)). Tyr237 carries the phosphotyrosine modification. Omega-N-methylarginine is present on Arg270. The tract at residues 293 to 349 (SEPPALPPPPPPARAFGPGPAETPAVGPGPGPRAALSRSASVRCAGPGGGGGGGAPG) is disordered. The span at 296–305 (PALPPPPPPA) shows a compositional bias: pro residues. A compositionally biased stretch (gly residues) spans 338 to 348 (GPGGGGGGGAP). Ser387 is subject to Phosphoserine.

In terms of assembly, heteromer. Composed of TAMALIN, CYTH2 and at least one GRM1. Also interacts with CYTH3, GRM2, GRM3 and GRM5.

It localises to the cytoplasm. It is found in the perinuclear region. Its subcellular location is the cell membrane. The protein resides in the postsynaptic cell membrane. In terms of biological role, plays a role in intracellular trafficking and contributes to the macromolecular organization of group 1 metabotropic glutamate receptors (mGluRs) at synapses. This is Protein TAMALIN from Homo sapiens (Human).